The following is a 414-amino-acid chain: D-mannose isomerase (414 aa).

Active-site proton donor/acceptor residues include histidine 255 and histidine 390.

Belongs to the N-acylglucosamine 2-epimerase family. In terms of assembly, monomer.

The catalysed reaction is D-mannose = D-fructose. Strongly inhibited by Ag(2+), Cu(2+) and cetyltrimethyl ammonium bromide (CTAB). In terms of biological role, catalyzes the reversible isomerization of D-mannose to D-fructose. Shows high specific activity towards mannose and fructose, and has no detectable activity towards other monosaccharides and disaccharides. The protein is D-mannose isomerase of Pseudomonas cannabina pv. alisalensis.